The primary structure comprises 500 residues: Glycerol kinase (500 aa).

Position 11 (threonine 11) interacts with ADP. 3 residues coordinate ATP: threonine 11, threonine 12, and serine 13. Threonine 11 contributes to the sn-glycerol 3-phosphate binding site. ADP is bound at residue arginine 15. The sn-glycerol 3-phosphate site is built by arginine 81, glutamate 82, tyrosine 133, and aspartate 242. Arginine 81, glutamate 82, tyrosine 133, aspartate 242, and glutamine 243 together coordinate glycerol. Threonine 264 and glycine 307 together coordinate ADP. ATP contacts are provided by threonine 264, glycine 307, glutamine 311, and glycine 411. Glycine 411 is an ADP binding site.

Belongs to the FGGY kinase family.

It catalyses the reaction glycerol + ATP = sn-glycerol 3-phosphate + ADP + H(+). It functions in the pathway polyol metabolism; glycerol degradation via glycerol kinase pathway; sn-glycerol 3-phosphate from glycerol: step 1/1. Inhibited by fructose 1,6-bisphosphate (FBP). In terms of biological role, key enzyme in the regulation of glycerol uptake and metabolism. Catalyzes the phosphorylation of glycerol to yield sn-glycerol 3-phosphate. The chain is Glycerol kinase from Bradyrhizobium sp. (strain BTAi1 / ATCC BAA-1182).